A 217-amino-acid chain; its full sequence is Phosphatase MT3486 (217 aa).

Aspartate 9 functions as the Nucleophile in the catalytic mechanism.

This sequence belongs to the HAD-like hydrolase superfamily.

Functionally, able to hydrolyze geranyl diphosphate (GPP), farnesyl diphosphate (FPP) and geranylgeranyl diphosphate (GGPP) to respectively yield geraniol, farnesol and geranylgeraniol. The chain is Phosphatase MT3486 from Mycobacterium tuberculosis (strain CDC 1551 / Oshkosh).